Consider the following 415-residue polypeptide: MEMQQNCSISCFWETQPLGCVKISCIFYHSKPRNINGLFLPPSSNTTLQKESQEGSPPPTQSQEPLKPMENVSRPIHHPLVLKTNFEEEEEEEEKPNDASSLWTKTPEEIEEKRAIKEMCYKSGEYYRFHAPPDIPSSKSIAPTVEKELEKPLENGSELQEGDGLTVPTKFSLFERAGEAKTSLDRKPRTDIAAFENGGGDCYAPQRIIFLGVDESEALAEDKETTSKGSNAKEESKNGLHPKHPLTARLVPTTHVLNATENISMKCRENPSSMNDVQPVRKPHFKGVKKRKWIYDEPKNFPGSGMRRAVHIPNPKHKMSYHHHNKNRNAENASYTHAQRDAVRTVTLNAPPRSRPTSGSYNKADVNKDPKLNLCPDKHMSTSYNGSAWRRRIPFSKTYSKTEKIYPEPRRNGSK.

Disordered regions lie at residues phenylalanine 39–histidine 77, alanine 220–threonine 247, and valine 346–lysine 415. 3 stretches are compositionally biased toward basic and acidic residues: residues alanine 220 to asparagine 238, aspartate 365 to methionine 380, and serine 400 to lysine 415.

This is an uncharacterized protein from Rattus norvegicus (Rat).